The primary structure comprises 184 residues: Major fimbrial subunit (184 aa).

The signal sequence occupies residues M1–A22. C49 and C88 are oxidised to a cystine.

The protein belongs to the fimbrial protein family.

The protein localises to the fimbrium. Functionally, major structural component of PMF fimbriae. The polypeptide is Major fimbrial subunit (pmfA) (Proteus mirabilis (strain HI4320)).